A 346-amino-acid polypeptide reads, in one-letter code: S-adenosylmethionine:tRNA ribosyltransferase-isomerase (346 aa).

Belongs to the QueA family. Monomer.

The protein resides in the cytoplasm. The enzyme catalyses 7-aminomethyl-7-carbaguanosine(34) in tRNA + S-adenosyl-L-methionine = epoxyqueuosine(34) in tRNA + adenine + L-methionine + 2 H(+). Its pathway is tRNA modification; tRNA-queuosine biosynthesis. Functionally, transfers and isomerizes the ribose moiety from AdoMet to the 7-aminomethyl group of 7-deazaguanine (preQ1-tRNA) to give epoxyqueuosine (oQ-tRNA). In Shewanella denitrificans (strain OS217 / ATCC BAA-1090 / DSM 15013), this protein is S-adenosylmethionine:tRNA ribosyltransferase-isomerase.